The sequence spans 227 residues: MGGKQSTAARSRGPFPGVSTDDSAVPPPGGAPHFGHYRAGGGAMGLRSRSVSSVAGMGMDPSSAGGVSFGLYTPASRGAGDAERAPGSGGSASDSTYAHGNGYQETGGGHHRDGMLYLGSRASLADALPLHIAPRWFSSHSGFKCPICSKSVASDEMEMHFIMCLSKPRLSYNDDVLTKDAGECVICLEELLQGDTIARLPCLCIYHKSCIDSWFEVNRSCPEHPAD.

The segment at 1–38 (MGGKQSTAARSRGPFPGVSTDDSAVPPPGGAPHFGHYR) is disordered. Residue G2 is the site of N-myristoyl glycine attachment. The interval 2–10 (GGKQSTAAR) is required for endosomal and lysosomal localization and myristoylation. Phosphoserine occurs at positions 50, 52, and 53. The disordered stretch occupies residues 77–105 (RGAGDAERAPGSGGSASDSTYAHGNGYQE). Y103 bears the Phosphotyrosine mark. S123 carries the phosphoserine modification. Residues 184–225 (CVICLEELLQGDTIARLPCLCIYHKSCIDSWFEVNRSCPEHP) form an RING-type; atypical zinc finger.

Interacts with AKT1, GLUL and TUBB2A. Interacts with ZNRF2. Interacts (via its RING domain) with UBE2N. Interacts (when phosphorylated) with YWHAE. N-myristoylation targets ZNRF1 to intracellular membranes. Post-translationally, phosphorylated by SRC at Tyr-103; leading to 'Lys-63'-linked ubiquitination of TLR3, lysosomal trafficking and degradation.

The protein localises to the endosome. Its subcellular location is the lysosome. The protein resides in the membrane. It localises to the cytoplasmic vesicle. It is found in the secretory vesicle. The protein localises to the synaptic vesicle membrane. The catalysed reaction is S-ubiquitinyl-[E2 ubiquitin-conjugating enzyme]-L-cysteine + [acceptor protein]-L-lysine = [E2 ubiquitin-conjugating enzyme]-L-cysteine + N(6)-ubiquitinyl-[acceptor protein]-L-lysine.. The protein operates within protein modification; protein ubiquitination. Its function is as follows. E3 ubiquitin-protein ligase that plays a role in different processes including cell differentiation, receptor recycling or regulation of inflammation. Mediates the ubiquitination of AKT1 and GLUL, thereby playing a role in neuron cells differentiation. Plays a role in the establishment and maintenance of neuronal transmission and plasticity. Regulates Schwann cells differentiation by mediating ubiquitination of GLUL. Promotes neurodegeneration by mediating 'Lys-48'-linked polyubiquitination and subsequent degradation of AKT1 in axons: degradation of AKT1 prevents AKT1-mediated phosphorylation of GSK3B, leading to GSK3B activation and phosphorylation of DPYSL2/CRMP2 followed by destabilization of microtubule assembly in axons. Ubiquitinates the Na(+)/K(+) ATPase alpha-1 subunit/ATP1A1 and thereby influences its endocytosis and/or degradation. Controls ligand-induced EGFR signaling via mediating receptor ubiquitination and recruitment of the ESCRT machinery. Acts as a negative feedback mechanism controlling TLR3 trafficking by mediating TLR3 'Lys-63'-linked polyubiquitination to reduce type I IFN production. Modulates inflammation by promoting caveolin-1/CAV1 ubiquitination and degradation to regulate TLR4-activated immune response. The polypeptide is E3 ubiquitin-protein ligase ZNRF1 (ZNRF1) (Bos taurus (Bovine)).